A 169-amino-acid chain; its full sequence is Glycine-rich RNA-binding protein 10 (169 aa).

One can recognise an RRM domain in the interval 6 to 84 (YRCFVGGLAW…RTITVNEAQS (79 aa)). Disordered regions lie at residues 80-101 (NEAQ…YGGR) and 121-169 (GYGS…GGGW). Residues 85-101 (RGGGGGGGRGGGGYGGR) are compositionally biased toward gly residues.

Expressed only in roots and stems.

In terms of biological role, possibly has a role in RNA transcription or processing during stress. This chain is Glycine-rich RNA-binding protein 10 (GRP10), found in Brassica napus (Rape).